Here is a 309-residue protein sequence, read N- to C-terminus: Ribonuclease Z (309 aa).

Zn(2+)-binding residues include His-61, His-63, Asp-65, His-66, His-144, Asp-212, and His-271. The active-site Proton acceptor is the Asp-65.

The protein belongs to the RNase Z family. As to quaternary structure, homodimer. It depends on Zn(2+) as a cofactor.

It carries out the reaction Endonucleolytic cleavage of RNA, removing extra 3' nucleotides from tRNA precursor, generating 3' termini of tRNAs. A 3'-hydroxy group is left at the tRNA terminus and a 5'-phosphoryl group is left at the trailer molecule.. Zinc phosphodiesterase, which displays some tRNA 3'-processing endonuclease activity. Probably involved in tRNA maturation, by removing a 3'-trailer from precursor tRNA. In Clostridium acetobutylicum (strain ATCC 824 / DSM 792 / JCM 1419 / IAM 19013 / LMG 5710 / NBRC 13948 / NRRL B-527 / VKM B-1787 / 2291 / W), this protein is Ribonuclease Z.